We begin with the raw amino-acid sequence, 112 residues long: Mu-ctenitoxin-Pn1a (112 aa).

The N-terminal stretch at 1 to 19 (MKLLGIFLVASFAFVLSFG) is a signal peptide. The propeptide occupies 20-33 (EEMIEGENPLEDQR). Cystine bridges form between Cys39/Cys56, Cys46/Cys62, Cys53/Cys85, Cys55/Cys73, Cys64/Cys71, Cys91/Cys106, and Cys102/Cys110. A Glycine amide modification is found at Gly111.

It belongs to the neurotoxin 04 (omega-agtx) family. 02 (Tx1) subfamily. In terms of processing, contains 7 disulfide bonds. Expressed by the venom gland.

It is found in the secreted. Its function is as follows. Reversible inhibitor of neuronal sodium channels (Nav1.2/ SCN2A) that binds in proximity to site 1 and displays increasing affinity as the membrane potential is depolarized. Induces excitatory symptoms and spastic paralysis in mice. This chain is Mu-ctenitoxin-Pn1a, found in Phoneutria nigriventer (Brazilian armed spider).